The primary structure comprises 534 residues: Sodium-dependent lysophosphatidylcholine symporter 1 (534 aa).

At 1–39 (MAKGEGAESGSAAGLLPTSILQASERPVQVKKEPKKKQQ) the chain is on the cytoplasmic side. Residues 40-69 (LSICNKLCYAVGGAPYQLTGCALGFFLQIY) traverse the membrane as a helical segment. The Extracellular segment spans residues 70-80 (LLDVAKVEPLP). The helical transmembrane segment at 81–101 (ASIILFVGRAWDAFTDPLVGF) threads the bilayer. The Cytoplasmic segment spans residues 102–113 (CISKSSWTRLGR). A helical membrane pass occupies residues 114–133 (LMPWIIFSTPLAIIAYFLIW). The Extracellular segment spans residues 134–148 (FVPDFPSGTESSHGF). A helical transmembrane segment spans residues 149–173 (LWYLLFYCLFETLVTCFHVPYSALT). Residues 174–180 (MFISTEQ) are Cytoplasmic-facing. Residues 181 to 212 (SERDSATAYRMTVEVLGTVIGTAIQGQIVGQA) form a helical membrane-spanning segment. Residues 213-232 (KAPCLQDQNGSVVVSEVANR) lie on the Extracellular side of the membrane. Cysteine 216 and cysteine 464 are joined by a disulfide. N-linked (GlcNAc...) asparagine glycosylation is found at asparagine 221 and asparagine 231. A helical transmembrane segment spans residues 233–266 (TQSTASLKDTQNAYLLAAGIIASIYVLCAFILIL). At 267–297 (GVREQRELYESQQAESMPFFQGLRLVMGHGP) the chain is on the cytoplasmic side. The helical transmembrane segment at 298–324 (YVKLIAGFLFTSLAFMLVEGNFALFCT) threads the bilayer. Residues 325-335 (YTLDFRNEFQN) lie on the Extracellular side of the membrane. Residues 336-354 (LLLAIMLSATFTIPIWQWF) form a helical membrane-spanning segment. At 355–358 (LTRF) the chain is on the cytoplasmic side. The helical transmembrane segment at 359-380 (GKKTAVYIGISSAVPFLILVAL) threads the bilayer. Residues 381-383 (MER) are Extracellular-facing. Residues 384–420 (NLIVTYVVAVAAGVSVAAAFLLPWSMLPDVIDDFHLK) form a helical membrane-spanning segment. At 421 to 430 (HPHSPGTEPI) the chain is on the cytoplasmic side. Residues 431 to 457 (FFSFYVFFTKFASGVSLGVSTLSLDFA) traverse the membrane as a helical segment. Residues 458–469 (NYQRQGCSQPEQ) lie on the Extracellular side of the membrane. Residues 470–493 (VKFTLKMLVTMAPIILILLGLLLF) form a helical membrane-spanning segment. Residues 494–534 (KLYPIDEEKRRQNKKALQALREEASSSGCSDTDSTELASIL) are Cytoplasmic-facing.

It belongs to the major facilitator superfamily. Post-translationally, N-glycosylated. Widely expressed. Exhibits an oscillatory pattern of expression in brown adipose tissue and liver consistent with a circadian rhythm. Enriched in brain micro-vessels, where it is specifically present in endothelium constituting the blood-brain barrier (at protein level).

It localises to the cell membrane. The protein resides in the endoplasmic reticulum membrane. It carries out the reaction a 1-acyl-sn-glycero-3-phosphocholine(in) + Na(+)(in) = a 1-acyl-sn-glycero-3-phosphocholine(out) + Na(+)(out). The catalysed reaction is 1-(4Z,7Z,10Z,13Z,16Z,19Z-docosahexaenoyl)-sn-glycero-3-phosphocholine(in) + Na(+)(in) = 1-(4Z,7Z,10Z,13Z,16Z,19Z-docosahexaenoyl)-sn-glycero-3-phosphocholine(out) + Na(+)(out). The enzyme catalyses 1-(9Z-octadecenoyl)-sn-glycero-3-phosphocholine(in) + Na(+)(in) = 1-(9Z-octadecenoyl)-sn-glycero-3-phosphocholine(out) + Na(+)(out). It catalyses the reaction 1-hexadecanoyl-sn-glycero-3-phosphocholine(in) + Na(+)(in) = 1-hexadecanoyl-sn-glycero-3-phosphocholine(out) + Na(+)(out). It carries out the reaction a 1-acyl-sn-glycero-3-phosphoethanolamine(in) + Na(+)(in) = a 1-acyl-sn-glycero-3-phosphoethanolamine(out) + Na(+)(out). In terms of biological role, sodium-dependent lysophosphatidylcholine (LPC) symporter, which plays an essential role for blood-brain barrier formation and function. Specifically expressed in endothelium of the blood-brain barrier of micro-vessels and transports LPC into the brain. Transport of LPC is essential because it constitutes the major mechanism by which docosahexaenoic acid (DHA), an omega-3 fatty acid that is essential for normal brain growth and cognitive function, enters the brain. Transports LPC carrying long-chain fatty acids such LPC oleate and LPC palmitate with a minimum acyl chain length of 14 carbons. Does not transport docosahexaenoic acid in unesterified fatty acid. Not required for central nervous system vascular morphogenesis. In Mus musculus (Mouse), this protein is Sodium-dependent lysophosphatidylcholine symporter 1.